The chain runs to 111 residues: Large ribosomal subunit protein eL33z (111 aa).

This sequence belongs to the eukaryotic ribosomal protein eL33 family.

In Arabidopsis thaliana (Mouse-ear cress), this protein is Large ribosomal subunit protein eL33z (RPL35AB).